We begin with the raw amino-acid sequence, 505 residues long: Aminoaldehyde dehydrogenase 1a (505 aa).

Na(+) is bound at residue D101. NAD(+)-binding positions include 161-163 and 187-190; these read TPW and KPSE. Residue L191 coordinates Na(+). NAD(+)-binding positions include 241–244 and E262; that span reads SFET. The active-site Proton acceptor is E262. Catalysis depends on C296, which acts as the Nucleophile. NAD(+) is bound by residues E395 and W461.

The protein belongs to the aldehyde dehydrogenase family. As to quaternary structure, forms homodimers.

The enzyme catalyses 4-aminobutanal + NAD(+) + H2O = 4-aminobutanoate + NADH + 2 H(+). It catalyses the reaction 3-aminopropanal + NAD(+) + H2O = beta-alanine + NADH + 2 H(+). The catalysed reaction is 4-(trimethylamino)butanal + NAD(+) + H2O = 4-(trimethylamino)butanoate + NADH + 2 H(+). It carries out the reaction 4-guanidinobutanal + NAD(+) + H2O = 4-guanidinobutanoate + NADH + 2 H(+). The enzyme catalyses betaine aldehyde + NAD(+) + H2O = glycine betaine + NADH + 2 H(+). Its pathway is amine and polyamine biosynthesis; betaine biosynthesis via choline pathway; betaine from betaine aldehyde: step 1/1. Dehydrogenase that catalyzes the oxidation of several aminoaldehydes. Metabolizes and detoxifies aldehyde products of polyamine degradation to non-toxic amino acids. Catalyzes the oxidation of 4-aminobutanal and 3-aminopropanal to 4-aminobutanoate and beta-alanine, respectively. Catalyzes the oxidation of 4-(trimethylamino)butanal and 4-guanidinobutanal to 4-trimethylammoniobutanoate and 4-guanidinobutanoate, respectively. Catalyzes the oxidation of betaine aldehyde to glycine betaine. Functionally, dehydrogenase that catalyzes the oxidation of several aminoaldehydes. Catalyzes the oxidation of betaine aldehyde to glycine betaine. Catalyzes the oxidation of 4-(trimethylamino)butanal to 4-trimethylammoniobutanoate. This is Aminoaldehyde dehydrogenase 1a from Zea mays (Maize).